Reading from the N-terminus, the 169-residue chain is Signal peptidase complex subunit 1 (169 aa).

Residues 1–93 (MARGGDTGCT…QKLAEQMFQG (93 aa)) lie on the Cytoplasmic side of the membrane. A (Microbial infection) Interaction with JEV NS2B region spans residues 91–169 (FQGIILFSAI…RKIKRHAKNN (79 aa)). The helical transmembrane segment at 94–114 (IILFSAIVGFIYGYVAEQFGW) threads the bilayer. A (Microbial infection) Interaction with HCV NS2 and HCV E2 region spans residues 110-169 (EQFGWTVYIVMAGFAFSCLLTLPPWPIYRRHPLKWLPVQESSTDDKKPGERKIKRHAKNN). Residue T115 is a topological domain, lumenal. The helical transmembrane segment at 116 to 136 (VYIVMAGFAFSCLLTLPPWPI) threads the bilayer. The Cytoplasmic portion of the chain corresponds to 137–169 (YRRHPLKWLPVQESSTDDKKPGERKIKRHAKNN). The disordered stretch occupies residues 148-169 (QESSTDDKKPGERKIKRHAKNN).

It belongs to the SPCS1 family. In terms of assembly, component of the signal peptidase complex paralog A (SPC-A) composed of a catalytic subunit SEC11A and three accessory subunits SPCS1, SPCS2 and SPCS3. Component of the signal peptidase complex paralog C (SPC-C) composed of a catalytic subunit SEC11C and three accessory subunits SPCS1, SPCS2 and SPCS3. Within the complex, interacts with SPCS2 and SPCS3. The complex induces a local thinning of the ER membrane which is used to measure the length of the signal peptide (SP) h-region of protein substrates. This ensures the selectivity of the complex towards h-regions shorter than 18-20 amino acids. (Microbial infection) Interacts with hepatitis C virus (HCV) proteins NS2 and E2. Interacts with NS2B from Japanese encephalitis virus (JEV), West Nile virus (WNV), and Zika virus (ZIKV). Post-translationally, may be phosphorylated.

Its subcellular location is the endoplasmic reticulum membrane. In terms of biological role, component of the signal peptidase complex (SPC) which catalyzes the cleavage of N-terminal signal sequences from nascent proteins as they are translocated into the lumen of the endoplasmic reticulum. Dispensable for SPC enzymatic activity. Functionally, (Microbial infection) Required for the post-translational processing of proteins involved in virion assembly and secretion from flaviviruses such as West Nile virus (WNV), Japanese encephalitis virus (JEV), Dengue virus type 2 (DENV-2), Yellow Fever virus (YFV), Zika virus (ZIKV) and hepatitis C virus (HCV). Plays a key role in the post-translational processing of flaviviral structural proteins prM, E, and NS1. In HCV, it is involved in virion assembly where it promotes the interaction between HCV virus proteins NS2 and E2. This Homo sapiens (Human) protein is Signal peptidase complex subunit 1 (SPCS1).